Here is a 63-residue protein sequence, read N- to C-terminus: DNA-directed RNA polymerase 7 kDa subunit (63 aa).

It belongs to the poxviridae DNA-directed RNA polymerase 7 kDa subunit family. As to quaternary structure, the DNA-dependent RNA polymerase used for intermediate and late genes expression consists of eight subunits 147 kDa, 133 kDa, 35 kDa, 30 kDa, 22 kDa, 19 kDa, 18 kDa and 7 kDa totalling more than 500 kDa in mass. The same holoenzyme, with the addition of the transcription-specificity factor RAP94, is used for early gene expression.

The protein localises to the virion. It catalyses the reaction RNA(n) + a ribonucleoside 5'-triphosphate = RNA(n+1) + diphosphate. Functionally, part of the DNA-dependent RNA polymerase which catalyzes the transcription of viral DNA into RNA using the four ribonucleoside triphosphates as substrates. Responsible for the transcription of early, intermediate and late genes. DNA-dependent RNA polymerase associates with the early transcription factor (ETF) thereby allowing the early genes transcription. Late transcription, and probably also intermediate transcription, require newly synthesized RNA polymerase. This Fowlpox virus (strain NVSL) (FPV) protein is DNA-directed RNA polymerase 7 kDa subunit (RPO7).